The following is a 546-amino-acid chain: Chaperonin GroEL 1 (546 aa).

Residues T29–P32, D86–T90, G414, and D499 each bind ATP.

The protein belongs to the chaperonin (HSP60) family. Forms a cylinder of 14 subunits composed of two heptameric rings stacked back-to-back. Interacts with the co-chaperonin GroES.

The protein resides in the cytoplasm. It carries out the reaction ATP + H2O + a folded polypeptide = ADP + phosphate + an unfolded polypeptide.. Together with its co-chaperonin GroES, plays an essential role in assisting protein folding. The GroEL-GroES system forms a nano-cage that allows encapsulation of the non-native substrate proteins and provides a physical environment optimized to promote and accelerate protein folding. This chain is Chaperonin GroEL 1, found in Roseiflexus sp. (strain RS-1).